Reading from the N-terminus, the 372-residue chain is Tyrosine--tRNA ligase 1 (372 aa).

L-tyrosine is bound by residues Tyr37, Tyr169, Gln173, Asp176, and Gln191. Positions 246–250 (KMSKS) match the 'KMSKS' region motif. An ATP-binding site is contributed by Lys249.

The protein belongs to the class-I aminoacyl-tRNA synthetase family. TyrS type 4 subfamily. In terms of assembly, homodimer.

The protein localises to the cytoplasm. The catalysed reaction is tRNA(Tyr) + L-tyrosine + ATP = L-tyrosyl-tRNA(Tyr) + AMP + diphosphate + H(+). Functionally, catalyzes the attachment of tyrosine to tRNA(Tyr) in a two-step reaction: tyrosine is first activated by ATP to form Tyr-AMP and then transferred to the acceptor end of tRNA(Tyr). The chain is Tyrosine--tRNA ligase 1 from Pyrobaculum aerophilum (strain ATCC 51768 / DSM 7523 / JCM 9630 / CIP 104966 / NBRC 100827 / IM2).